We begin with the raw amino-acid sequence, 337 residues long: tRNA N6-adenosine threonylcarbamoyltransferase (337 aa).

The Fe cation site is built by histidine 114 and histidine 118. Residues 136-140 (LVSGG), aspartate 169, glycine 182, aspartate 186, and asparagine 275 contribute to the substrate site. Aspartate 301 provides a ligand contact to Fe cation.

This sequence belongs to the KAE1 / TsaD family. Fe(2+) is required as a cofactor.

Its subcellular location is the cytoplasm. The enzyme catalyses L-threonylcarbamoyladenylate + adenosine(37) in tRNA = N(6)-L-threonylcarbamoyladenosine(37) in tRNA + AMP + H(+). Functionally, required for the formation of a threonylcarbamoyl group on adenosine at position 37 (t(6)A37) in tRNAs that read codons beginning with adenine. Is involved in the transfer of the threonylcarbamoyl moiety of threonylcarbamoyl-AMP (TC-AMP) to the N6 group of A37, together with TsaE and TsaB. TsaD likely plays a direct catalytic role in this reaction. The protein is tRNA N6-adenosine threonylcarbamoyltransferase of Streptococcus uberis (strain ATCC BAA-854 / 0140J).